Here is a 474-residue protein sequence, read N- to C-terminus: ABHD16B (474 aa).

The AB hydrolase-1 domain maps to 175 to 295 (VICCEGNAGF…QSWKGLVVRT (121 aa)). Active-site charge relay system residues include S248, D323, and H423.

The protein belongs to the AB hydrolase superfamily. ABHD16 family. In terms of tissue distribution, expressed in most tissues, with highest expression found in the testes, skeletal muscle, and brown adipose tissue.

The catalysed reaction is a 1,2-diacyl-sn-glycero-3-phospho-L-serine + H2O = a 2-acyl-sn-glycero-3-phospho-L-serine + a fatty acid + H(+). It catalyses the reaction a 1-acylglycerol + H2O = glycerol + a fatty acid + H(+). It carries out the reaction 1-(9Z-octadecenoyl)-glycerol + H2O = glycerol + (9Z)-octadecenoate + H(+). In terms of biological role, hydrolyzes the sn-1 position of glycerophospholipids with high specificity towards phosphatidylserine (PS), PS-PLA1 enzyme. Also hydrolyzes the acyl chain of glycerolipids with a preference for the monoacylglycerol (MAG) 1-acylglycerol, MAG lipase. Plays a regulatory role in cellular lipid homeostasis by modulating genes involved in neutral lipid degradation and in phospholipid synthesis and composition. The polypeptide is ABHD16B (Mus musculus (Mouse)).